Here is a 342-residue protein sequence, read N- to C-terminus: Probable dual-specificity RNA methyltransferase RlmN (342 aa).

E91 (proton acceptor) is an active-site residue. The region spanning 97–326 is the Radical SAM core domain; sequence YRFGNTACVS…CTVRRELGSD (230 aa). C104 and C331 form a disulfide bridge. The [4Fe-4S] cluster site is built by C111, C115, and C118. Residues 157 to 158, S189, 212 to 214, and N288 contribute to the S-adenosyl-L-methionine site; these read GE and SLH. Residue C331 is the S-methylcysteine intermediate of the active site.

Belongs to the radical SAM superfamily. RlmN family. The cofactor is [4Fe-4S] cluster.

It is found in the cytoplasm. The catalysed reaction is adenosine(2503) in 23S rRNA + 2 reduced [2Fe-2S]-[ferredoxin] + 2 S-adenosyl-L-methionine = 2-methyladenosine(2503) in 23S rRNA + 5'-deoxyadenosine + L-methionine + 2 oxidized [2Fe-2S]-[ferredoxin] + S-adenosyl-L-homocysteine. The enzyme catalyses adenosine(37) in tRNA + 2 reduced [2Fe-2S]-[ferredoxin] + 2 S-adenosyl-L-methionine = 2-methyladenosine(37) in tRNA + 5'-deoxyadenosine + L-methionine + 2 oxidized [2Fe-2S]-[ferredoxin] + S-adenosyl-L-homocysteine. Its function is as follows. Specifically methylates position 2 of adenine 2503 in 23S rRNA and position 2 of adenine 37 in tRNAs. In Thermoanaerobacter pseudethanolicus (strain ATCC 33223 / 39E) (Clostridium thermohydrosulfuricum), this protein is Probable dual-specificity RNA methyltransferase RlmN.